The chain runs to 827 residues: Villin-1 (827 aa).

Residues 1 to 126 (MTKLNAQVKG…IRKGGVASGM (126 aa)) form a necessary for homodimerization region. Residues 1 to 734 (MTKLNAQVKG…YDDLKAELGN (734 aa)) form a core region. A Gelsolin-like 1 repeat occupies 27–76 (MQMVPVPSSTFGSFFDGDCYVVLAIHKTSSTLSYDIHYWIGQDSSQDEQG). 2 LPA/PIP2-binding site regions span residues 112–119 (KQGLVIRK) and 138–146 (RLLHVKGKR). 2 Gelsolin-like repeats span residues 148–188 (VLAG…MERL) and 265–309 (LVVR…QERS). Position 366 is a phosphoserine (Ser-366). Gelsolin-like repeat units follow at residues 407–457 (DLEL…DEIA), 528–568 (TKAF…DERE), and 631–672 (FLAT…EEKK). A phosphoserine mark is found at Ser-735 and Ser-776. Residues 735-827 (SGDWSQIADE…QNIKKEKGLF (93 aa)) are headpiece. The HP domain occupies 761 to 827 (SGPLPTFPLE…QNIKKEKGLF (67 aa)). The tract at residues 816 to 824 (KQQNIKKEK) is LPA/PIP2-binding site 3.

The protein belongs to the villin/gelsolin family. In terms of assembly, monomer. Homodimer; homodimerization is necessary for actin-bundling. Associates with F-actin; phosphorylation at tyrosine residues decreases the association with F-actin. Interacts (phosphorylated at C-terminus tyrosine phosphorylation sites) with PLCG1 (via the SH2 domains). Interacts (phosphorylated form) with PLCG1; the interaction is enhanced by hepatocyte growth factor (HGF). In terms of processing, phosphorylated on tyrosine residues by SRC. The unphosphorylated form increases the initial rate of actin-nucleating activity, whereas the tyrosine phosphorylated form inhibits actin-nucleating activity, enhances actin-bundling activity and enhances actin-severing activity by reducing high Ca(2+) requirements. The tyrosine phosphorylated form does not regulate actin-capping activity. Tyrosine phosphorylation is essential for cell migration: tyrosine phosphorylation sites in the N-terminus half regulate actin reorganization and cell morphology, whereas tyrosine phosphorylation sites in the C-terminus half regulate cell migration via interaction with PLCG1. Tyrosine phosphorylation is induced by epidermal growth factor (EGF) and stimulates cell migration. In terms of tissue distribution, expressed in small intestin, colon, kidney and enterocytes (at protein level).

The protein resides in the cytoplasm. It localises to the cytoskeleton. It is found in the cell projection. The protein localises to the microvillus. Its subcellular location is the lamellipodium. The protein resides in the ruffle. It localises to the filopodium tip. It is found in the filopodium. Functionally, epithelial cell-specific Ca(2+)-regulated actin-modifying protein that modulates the reorganization of microvillar actin filaments. Plays a role in the actin nucleation, actin filament bundle assembly, actin filament capping and severing. Binds phosphatidylinositol 4,5-bisphosphate (PIP2) and lysophosphatidic acid (LPA); binds LPA with higher affinity than PIP2. Binding to LPA increases its phosphorylation by SRC and inhibits all actin-modifying activities. Binding to PIP2 inhibits actin-capping and -severing activities but enhances actin-bundling activity. Regulates the intestinal epithelial cell morphology, cell invasion, cell migration and apoptosis. Protects against apoptosis induced by dextran sodium sulfate (DSS) in the gastrointestinal epithelium. Appears to regulate cell death by maintaining mitochondrial integrity. Enhances hepatocyte growth factor (HGF)-induced epithelial cell motility, chemotaxis and wound repair. Upon S.flexneri cell infection, its actin-severing activity enhances actin-based motility of the bacteria and plays a role during the dissemination. The sequence is that of Villin-1 (Vil1) from Mus musculus (Mouse).